A 185-amino-acid chain; its full sequence is uncharacterized protein (185 aa).

The next 2 helical transmembrane spans lie at 1–21 and 111–131; these read MMKF…LTPE and FLWI…AFAW.

The protein to A.aeolicus aq_1900.

Its subcellular location is the cell membrane. This is an uncharacterized protein from Aquifex aeolicus (strain VF5).